Here is a 90-residue protein sequence, read N- to C-terminus: Conotoxin Im6.2 (90 aa).

The N-terminal stretch at 1 to 18 is a signal peptide; that stretch reads MKLTILLLVAALLVLTQA. The propeptide occupies 19 to 29; that stretch reads RTERRRVKSRK. Cystine bridges form between cysteine 61-cysteine 75, cysteine 68-cysteine 79, and cysteine 74-cysteine 84. Glutamate 89 carries the post-translational modification Glutamic acid 1-amide.

It belongs to the conotoxin O2 superfamily. As to expression, expressed by the venom duct.

It is found in the secreted. Its function is as follows. Probable neurotoxin. This chain is Conotoxin Im6.2, found in Conus imperialis (Imperial cone).